Here is a 350-residue protein sequence, read N- to C-terminus: DNA polymerase delta subunit 3 (350 aa).

The tract at residues 131-350 (EEKSKPLVRP…LESFFKRKAK (220 aa)) is disordered. Composition is skewed to basic and acidic residues over residues 146-162 (TTPE…KDMG) and 172-195 (MKKD…EENL). Position 223 is a phosphothreonine (Thr-223). The residue at position 230 (Ser-230) is a Phosphoserine. A compositionally biased stretch (basic and acidic residues) spans 234–248 (SPKETDSNDKDKNND). Residues 249-262 (DLEDLLETTAEDSL) are compositionally biased toward acidic residues. A compositionally biased stretch (basic and acidic residues) spans 274-286 (SETEHSKEPKSEE). Over residues 320–332 (LSSSKKQETPSSN) the composition is skewed to polar residues.

In terms of assembly, DNA polymerase delta is a heterotrimer of POL3, POL32 and HYS2. POL32 can form homodimers.

The protein resides in the nucleus. Its function is as follows. DNA polymerase delta (DNA polymerase III) participates in chromosomal DNA replication. It is required during synthesis of the leading and lagging DNA strands at the replication fork and binds at/or near replication origins and moves along DNA with the replication fork. It has 3'-5' proofreading exonuclease activity that correct errors arising during DNA replication. It is also involved in DNA synthesis during DNA repair. In Saccharomyces cerevisiae (strain ATCC 204508 / S288c) (Baker's yeast), this protein is DNA polymerase delta subunit 3 (POL32).